Consider the following 360-residue polypeptide: MLIWLADWLTQFDSGFNVFSYLTLRAILSTLTALLIAILIGPKMIRYLQRMQIGQTVRDDGPQSHLSKSGTPTMGGLLILAAIVVSGLLWADLTNRYVLVTLTVVVAYGIIGFVDDYRKVIRKDSKGLIARWKYFWQSVVALGVAFYLYSSATMSAETSLLVPFFKEVFPQLGIFFIIITYFAIVGTSNAVNLTDGLDGLAIVPTILVAGAFAIFAYVTGNANFAEYLNIPHIPLTSELVIVCTAMVGAGLGFLWFNTYPAQVFMGDVGSLALGGTLGVLAVLVRQELVLIIMGGVFVMETLSVILQVGSYKLRGQRIFRMAPIHHHYELKGWPEPRVIVRFWIISIILVLVGLATLKLR.

10 helical membrane passes run 21–41 (YLTL…ILIG), 73–93 (TMGG…WADL), 97–117 (YVLV…VDDY), 134–154 (YFWQ…SATM), 168–188 (VFPQ…VGTS), 199–219 (GLAI…AYVT), 239–259 (LVIV…FNTY), 263–283 (VFMG…LAVL), 288–308 (LVLI…ILQV), and 338–358 (VIVR…ATLK).

This sequence belongs to the glycosyltransferase 4 family. MraY subfamily. Mg(2+) is required as a cofactor.

The protein resides in the cell inner membrane. The enzyme catalyses UDP-N-acetyl-alpha-D-muramoyl-L-alanyl-gamma-D-glutamyl-meso-2,6-diaminopimeloyl-D-alanyl-D-alanine + di-trans,octa-cis-undecaprenyl phosphate = di-trans,octa-cis-undecaprenyl diphospho-N-acetyl-alpha-D-muramoyl-L-alanyl-D-glutamyl-meso-2,6-diaminopimeloyl-D-alanyl-D-alanine + UMP. It functions in the pathway cell wall biogenesis; peptidoglycan biosynthesis. Functionally, catalyzes the initial step of the lipid cycle reactions in the biosynthesis of the cell wall peptidoglycan: transfers peptidoglycan precursor phospho-MurNAc-pentapeptide from UDP-MurNAc-pentapeptide onto the lipid carrier undecaprenyl phosphate, yielding undecaprenyl-pyrophosphoryl-MurNAc-pentapeptide, known as lipid I. The sequence is that of Phospho-N-acetylmuramoyl-pentapeptide-transferase from Alteromonas mediterranea (strain DSM 17117 / CIP 110805 / LMG 28347 / Deep ecotype).